The sequence spans 121 residues: Large ribosomal subunit protein uL18 (121 aa).

This sequence belongs to the universal ribosomal protein uL18 family. Part of the 50S ribosomal subunit; part of the 5S rRNA/L5/L18/L25 subcomplex. Contacts the 5S and 23S rRNAs.

Functionally, this is one of the proteins that bind and probably mediate the attachment of the 5S RNA into the large ribosomal subunit, where it forms part of the central protuberance. The sequence is that of Large ribosomal subunit protein uL18 from Methylibium petroleiphilum (strain ATCC BAA-1232 / LMG 22953 / PM1).